Here is a 155-residue protein sequence, read N- to C-terminus: Small ribosomal subunit protein uS7 (155 aa).

The protein belongs to the universal ribosomal protein uS7 family. Part of the 30S ribosomal subunit. Contacts proteins S9 and S11.

Functionally, one of the primary rRNA binding proteins, it binds directly to 16S rRNA where it nucleates assembly of the head domain of the 30S subunit. Is located at the subunit interface close to the decoding center, probably blocks exit of the E-site tRNA. The chain is Small ribosomal subunit protein uS7 from Helicobacter pylori (strain Shi470).